Reading from the N-terminus, the 104-residue chain is Large ribosomal subunit protein bL21 (104 aa).

It belongs to the bacterial ribosomal protein bL21 family. Part of the 50S ribosomal subunit. Contacts protein L20.

Its function is as follows. This protein binds to 23S rRNA in the presence of protein L20. The chain is Large ribosomal subunit protein bL21 from Pseudomonas entomophila (strain L48).